We begin with the raw amino-acid sequence, 800 residues long: Transcription initiation factor TFIID subunit 5 (800 aa).

Residues 1-74 (MAALAEEQTE…KPTVAVSAAA (74 aa)) form a disordered region. The span at 30 to 50 (DGAGEGSGGTTNNGPNGGGGN) shows a compositional bias: gly residues. In terms of domain architecture, LisH spans 92–124 (HDRQTLLAVLQFLRQSKLREAEEALRREAGLLE). The disordered stretch occupies residues 153 to 189 (ASAPGPAAPDPPGTGASGATVVSGSASGPAAPGKVGS). Positions 165–189 (GTGASGATVVSGSASGPAAPGKVGS) are enriched in low complexity. Residues 194–340 (DQPDVSAVLS…NIVQEHLYID (147 aa)) are NTD2; involved in homo-dimerization; also involved in TFIID-TFIIF contacts in the RNA Pol II pre-initiation complex (PIC). Over residues 384–395 (VPLDDEDEEGEN) the composition is skewed to acidic residues. The segment at 384-438 (VPLDDEDEEGENEEGKPKKKKPKKDSIGSKSKKQDPNAPPQNRIPLPELKDSDKL) is disordered. A compositionally biased stretch (basic and acidic residues) spans 407-418 (KDSIGSKSKKQD). 6 WD repeats span residues 468–507 (NAYQ…LRSV), 541–580 (GHSG…CLVG), 583–624 (GHNY…RIFA), 625–666 (GHLA…RIFT), 667–706 (GHKG…MVGE), and 709–748 (GHTD…EDLE).

This sequence belongs to the WD repeat TAF5 family. As to quaternary structure, homodimer. Component of the TFIID basal transcription factor complex, composed of TATA-box-binding protein TBP, and a number of TBP-associated factors (TAFs), including TAF1, TAF2, TAF3, TAF4, TAF5, TAF6, TAF7, TAF8, TAF9, TAF10, TAF11, TAF12 and TAF13. The TFIID complex structure can be divided into 3 modules TFIID-A, TFIID-B, and TFIID-C. TAF5 forms the TFIID-A module together with TAF3 and TBP, and in TFIID-B with TAF8. Component of the TFTC-HAT complex, at least composed of TAF5L, TAF6L, TADA3L, SUPT3H/SPT3, TAF2, TAF4, TAF5, GCN5L2/GCN5, TAF10 and TRRAP. TBP is not part of the TFTC-HAT complex. Interacts strongly with the histone H4-related TAF6 and the histone H3-related TAF9, as well as a stable complex comprised of both TAF6 and TAF9. Apparently weaker interactions with TBP, TAF1, TAF11, and TAF12, but not TAF7, also have been observed. (Microbial infection) Interacts with SV40 Large T antigen.

The protein localises to the nucleus. Functionally, the TFIID basal transcription factor complex plays a major role in the initiation of RNA polymerase II (Pol II)-dependent transcription. TFIID recognizes and binds promoters with or without a TATA box via its subunit TBP, a TATA-box-binding protein, and promotes assembly of the pre-initiation complex (PIC). The TFIID complex consists of TBP and TBP-associated factors (TAFs), including TAF1, TAF2, TAF3, TAF4, TAF5, TAF6, TAF7, TAF8, TAF9, TAF10, TAF11, TAF12 and TAF13. The TFIID complex structure can be divided into 3 modules TFIID-A, TFIID-B, and TFIID-C. TAF5 is involved in two modules of TFIID, in TFIID-A together with TAF3 and TBP, and in TFIID-B with TAF8. Involved in contacts between TFIID and TFIIF in the PIC. In Homo sapiens (Human), this protein is Transcription initiation factor TFIID subunit 5 (TAF5).